We begin with the raw amino-acid sequence, 423 residues long: Serine--tRNA ligase (423 aa).

Thr-231 to Glu-233 lines the L-serine pocket. Arg-262–Glu-264 contacts ATP. Glu-285 contributes to the L-serine binding site. Glu-349–Ser-352 provides a ligand contact to ATP. Ser-384 contributes to the L-serine binding site.

Belongs to the class-II aminoacyl-tRNA synthetase family. Type-1 seryl-tRNA synthetase subfamily. Homodimer. The tRNA molecule binds across the dimer.

It localises to the cytoplasm. It carries out the reaction tRNA(Ser) + L-serine + ATP = L-seryl-tRNA(Ser) + AMP + diphosphate + H(+). The catalysed reaction is tRNA(Sec) + L-serine + ATP = L-seryl-tRNA(Sec) + AMP + diphosphate + H(+). It participates in aminoacyl-tRNA biosynthesis; selenocysteinyl-tRNA(Sec) biosynthesis; L-seryl-tRNA(Sec) from L-serine and tRNA(Sec): step 1/1. Functionally, catalyzes the attachment of serine to tRNA(Ser). Is also able to aminoacylate tRNA(Sec) with serine, to form the misacylated tRNA L-seryl-tRNA(Sec), which will be further converted into selenocysteinyl-tRNA(Sec). The sequence is that of Serine--tRNA ligase from Acinetobacter baumannii (strain AB307-0294).